A 217-amino-acid polypeptide reads, in one-letter code: 3-demethoxyubiquinol 3-hydroxylase (217 aa).

Residues glutamate 66, glutamate 96, histidine 99, glutamate 148, glutamate 180, and histidine 183 each contribute to the Fe cation site.

The protein belongs to the COQ7 family. Fe cation is required as a cofactor.

The protein localises to the cell membrane. It carries out the reaction a 5-methoxy-2-methyl-3-(all-trans-polyprenyl)benzene-1,4-diol + AH2 + O2 = a 3-demethylubiquinol + A + H2O. Its pathway is cofactor biosynthesis; ubiquinone biosynthesis. Catalyzes the hydroxylation of 2-nonaprenyl-3-methyl-6-methoxy-1,4-benzoquinol during ubiquinone biosynthesis. The sequence is that of 3-demethoxyubiquinol 3-hydroxylase from Xanthomonas campestris pv. campestris (strain 8004).